The primary structure comprises 519 residues: 6-phosphofructo-2-kinase/fructose-2,6-bisphosphatase 2 (519 aa).

The span at 1-17 shows a compositional bias: polar residues; that stretch reads MSENSTFSTEDSCNSSY. The tract at residues 1 to 22 is disordered; the sequence is MSENSTFSTEDSCNSSYKPHAS. S2 bears the N-acetylserine mark. The tract at residues 2–251 is 6-phosphofructo-2-kinase; that stretch reads SENSTFSTED…VYYLMNIHVH (250 aa). S32 carries the phosphoserine; by PKA modification. 48-56 contacts ATP; that stretch reads GLPARGKTY. The beta-D-fructose 6-phosphate site is built by R81 and R105. D131 is a catalytic residue. Beta-D-fructose 6-phosphate contacts are provided by T133 and R139. Residue C161 is part of the active site. 170–175 serves as a coordination point for ATP; the sequence is NILEVK. Beta-D-fructose 6-phosphate is bound by residues K175, R196, and Y200. The segment at 252-519 is fructose-2,6-bisphosphatase; the sequence is PRTIYLCRHG…PKTQVSIPVV (268 aa). R259 contributes to the beta-D-fructose 2,6-bisphosphate binding site. H260 (tele-phosphohistidine intermediate) is an active-site residue. Beta-D-fructose 2,6-bisphosphate is bound by residues N266 and G272. E329 serves as the catalytic Proton donor/acceptor. Y340, R354, K358, Y369, Q395, and R399 together coordinate beta-D-fructose 2,6-bisphosphate. ATP is bound at residue 351–354; sequence FALR. ATP is bound by residues 395–399 and Y431; that span reads QAVMR. The interval 448–493 is disordered; that stretch reads HRDKPTHNFPKSQTPVRMRRNSFTPLSSSNTIRRPRNYSVGSRPLK. Polar residues predominate over residues 456–479; the sequence is FPKSQTPVRMRRNSFTPLSSSNTI. S469 bears the Phosphoserine mark. T471 carries the post-translational modification Phosphothreonine. T478 carries the post-translational modification Phosphothreonine; by PKC. A phosphoserine mark is found at S486 and S496. Residues 500–519 form a disordered region; it reads ALDMQEGADQPKTQVSIPVV. The span at 510–519 shows a compositional bias: polar residues; that stretch reads PKTQVSIPVV.

The protein in the C-terminal section; belongs to the phosphoglycerate mutase family. As to quaternary structure, homodimer. Forms a heterodimer with PFKFB3. In terms of processing, phosphorylation by AMPK stimulates activity. In terms of tissue distribution, highest levels in kidney; also found in heart, brain, spleen, lung, liver, skeletal muscle and testis.

It catalyses the reaction beta-D-fructose 2,6-bisphosphate + H2O = beta-D-fructose 6-phosphate + phosphate. It carries out the reaction beta-D-fructose 6-phosphate + ATP = beta-D-fructose 2,6-bisphosphate + ADP + H(+). With respect to regulation, phosphorylation results in the activation of the kinase activity. In terms of biological role, synthesis and degradation of fructose 2,6-bisphosphate. This chain is 6-phosphofructo-2-kinase/fructose-2,6-bisphosphatase 2 (Pfkfb2), found in Mus musculus (Mouse).